Reading from the N-terminus, the 117-residue chain is Protein Turandot F (117 aa).

Positions 1 to 22 (MKTVILFSFLLVLLGYLGAGHA) are cleaved as a signal peptide.

This sequence belongs to the Turandot family.

The protein localises to the secreted. A humoral factor that may play a role in stress tolerance. The protein is Protein Turandot F of Drosophila sechellia (Fruit fly).